We begin with the raw amino-acid sequence, 370 residues long: 4-hydroxy-3-methylbut-2-en-1-yl diphosphate synthase (flavodoxin) (370 aa).

[4Fe-4S] cluster is bound by residues Cys-270, Cys-273, Cys-305, and Glu-312.

This sequence belongs to the IspG family. It depends on [4Fe-4S] cluster as a cofactor.

The catalysed reaction is (2E)-4-hydroxy-3-methylbut-2-enyl diphosphate + oxidized [flavodoxin] + H2O + 2 H(+) = 2-C-methyl-D-erythritol 2,4-cyclic diphosphate + reduced [flavodoxin]. The protein operates within isoprenoid biosynthesis; isopentenyl diphosphate biosynthesis via DXP pathway; isopentenyl diphosphate from 1-deoxy-D-xylulose 5-phosphate: step 5/6. Functionally, converts 2C-methyl-D-erythritol 2,4-cyclodiphosphate (ME-2,4cPP) into 1-hydroxy-2-methyl-2-(E)-butenyl 4-diphosphate. This is 4-hydroxy-3-methylbut-2-en-1-yl diphosphate synthase (flavodoxin) from Hahella chejuensis (strain KCTC 2396).